Reading from the N-terminus, the 221-residue chain is Uracil-DNA glycosylase (221 aa).

The active-site Proton acceptor is Asp-65.

Belongs to the uracil-DNA glycosylase (UDG) superfamily. UNG family.

The protein localises to the cytoplasm. It carries out the reaction Hydrolyzes single-stranded DNA or mismatched double-stranded DNA and polynucleotides, releasing free uracil.. Its function is as follows. Excises uracil residues from the DNA which can arise as a result of misincorporation of dUMP residues by DNA polymerase or due to deamination of cytosine. This is Uracil-DNA glycosylase from Flavobacterium johnsoniae (strain ATCC 17061 / DSM 2064 / JCM 8514 / BCRC 14874 / CCUG 350202 / NBRC 14942 / NCIMB 11054 / UW101) (Cytophaga johnsonae).